The sequence spans 402 residues: Putative F-box protein At1g70970 (402 aa).

Positions 4–52 (SSSETLHVEDLQTEIMSWLPLKSLLRFVIVSKKWASIIRGEQFKALYLR) constitute an F-box domain.

The sequence is that of Putative F-box protein At1g70970 from Arabidopsis thaliana (Mouse-ear cress).